We begin with the raw amino-acid sequence, 879 residues long: Phosphoenolpyruvate carboxylase (879 aa).

Active-site residues include H138 and K545.

The protein belongs to the PEPCase type 1 family. Mg(2+) is required as a cofactor.

It carries out the reaction oxaloacetate + phosphate = phosphoenolpyruvate + hydrogencarbonate. Forms oxaloacetate, a four-carbon dicarboxylic acid source for the tricarboxylic acid cycle. In Haemophilus influenzae (strain ATCC 51907 / DSM 11121 / KW20 / Rd), this protein is Phosphoenolpyruvate carboxylase (ppc).